The sequence spans 192 residues: ATP-dependent Clp protease proteolytic subunit 1 (192 aa).

The active-site Nucleophile is Ser-92. His-117 is a catalytic residue.

It belongs to the peptidase S14 family. In terms of assembly, fourteen ClpP subunits assemble into 2 heptameric rings which stack back to back to give a disk-like structure with a central cavity, resembling the structure of eukaryotic proteasomes.

Its subcellular location is the cytoplasm. It catalyses the reaction Hydrolysis of proteins to small peptides in the presence of ATP and magnesium. alpha-casein is the usual test substrate. In the absence of ATP, only oligopeptides shorter than five residues are hydrolyzed (such as succinyl-Leu-Tyr-|-NHMec, and Leu-Tyr-Leu-|-Tyr-Trp, in which cleavage of the -Tyr-|-Leu- and -Tyr-|-Trp bonds also occurs).. In terms of biological role, cleaves peptides in various proteins in a process that requires ATP hydrolysis. Has a chymotrypsin-like activity. Plays a major role in the degradation of misfolded proteins. This Chlamydia abortus (strain DSM 27085 / S26/3) (Chlamydophila abortus) protein is ATP-dependent Clp protease proteolytic subunit 1.